The sequence spans 2256 residues: GON-4-like protein (2256 aa).

Disordered regions lie at residues 1-56, 105-213, and 227-266; these read MLPC…DSAG, PSLE…SLGP, and LFIP…MTYD. The segment covering 23-35 has biased composition (basic and acidic residues); the sequence is EDLHLEAAVKPDT. Over residues 40-53 the composition is skewed to polar residues; sequence DCTSESLSWGQSHD. The span at 141-176 shows a compositional bias: basic and acidic residues; that stretch reads TREDGGDHTVPEEPPSGEHAEEVKAEGGELEMHSEG. Residues 242–254 are compositionally biased toward basic residues; the sequence is RKKTKKGTKRKRD. Residue Ser-346 is modified to Phosphoserine. Over residues 366-395 the composition is skewed to acidic residues; it reads EDDDSSDEEYQPDEEEEDETAEESLLESDV. Disordered regions lie at residues 366 to 428, 441 to 460, and 545 to 573; these read EDDD…VLSE, SAEV…QTRD, and DVEN…DTED. Residues 545–571 show a composition bias toward acidic residues; sequence DVENEDEADDDDDPEYNFLEDLDEPDT. The tract at residues 609-1363 is required for interaction with YY1, SIN3A and HDAC1, and transcriptional repression activity; the sequence is EMGFSNMEDD…DCMEEISSDF (755 aa). The residue at position 783 (Ser-783) is a Phosphoserine. 2 stretches are compositionally biased toward low complexity: residues 947–959 and 1094–1115; these read TAGG…TETS and PWSE…LPSL. Disordered stretches follow at residues 947-969, 1078-1141, 1241-1288, and 1360-1620; these read TAGG…KTSP, AALP…SPCV, AEGK…EAVS, and SSDF…SRAR. The span at 1119-1135 shows a compositional bias: basic residues; sequence KFRKPYVRRKPTRRKGA. The span at 1364-1386 shows a compositional bias: basic and acidic residues; that stretch reads PKQDIGEEVKEECCMELDRDSPQ. Composition is skewed to polar residues over residues 1387-1401 and 1429-1444; these read EKAS…QTAT and LPQS…TVLN. Ser-1445 is modified (phosphoserine). A compositionally biased stretch (acidic residues) spans 1475–1495; that stretch reads GAEEEEEEDFDDLTQDEEDEL. A compositionally biased stretch (low complexity) spans 1496-1510; it reads SSASEESVLSVPELQ. Positions 1529-1553 are enriched in acidic residues; sequence GESEEENSQEENSEPEEEEEEEAEG. Basic residues predominate over residues 1606–1620; it reads RSSHRARSRRGSRAR. PAH domains are found at residues 1644 to 1716 and 1726 to 1797; these read EQKD…LLPE and EQQA…FDHL. 2 disordered regions span residues 1831–1886 and 1909–1966; these read VEEE…LKKS and LELV…APIP. Positions 1851 to 1868 are enriched in basic and acidic residues; it reads EIGVQHQDKESEWPEAAK. 2 positions are modified to phosphoserine: Ser-1921 and Ser-1994. 2 disordered regions span residues 2050–2078 and 2110–2148; these read PETS…STRD and IRGT…VLPK. The segment covering 2111–2129 has biased composition (low complexity); that stretch reads RGTSSGASASEAAPTASRE. The Myb-like domain occupies 2163 to 2216; the sequence is STGEKVVLWTREADRVILTMCQEQGAQPHTFSVISQQLGNKTPVEVSHRFRELM. The tract at residues 2223 to 2256 is disordered; sequence CEASSEDEDDATSTSNADQLSDHGDLLSEEELDE.

In terms of assembly, found in a complex with YY1, SIN3A and HDAC1.

Its subcellular location is the nucleus. In terms of biological role, has transcriptional repressor activity, probably as part of a complex with YY1, SIN3A and HDAC1. Required for B cell lymphopoiesis. The protein is GON-4-like protein (Gon4l) of Rattus norvegicus (Rat).